The primary structure comprises 217 residues: MAQAMASMTGLSQGVLPSRRADSRTRTAVVIVRASAEGDAVAQAGRRAVIGLVATGIVGGALSQAARAETVKTIKIGAPPPPSGGLPGTLNSDQARDFDLPLKERFYLQPLPPAEAAARVKTSAQDIINLKPLIDKKAWPYVQNDLRLRASYLRYDLKTVIASKPKEEKKSLKELTGKLFSTIDDLDHAAKIKSTPEAEKYFAATKDALGDVLAKLG.

Residues 1–68 constitute a chloroplast transit peptide; that stretch reads MAQAMASMTG…GGALSQAARA (68 aa).

It belongs to the PsbQ family.

Its subcellular location is the plastid. The protein localises to the chloroplast thylakoid membrane. This is Oxygen-evolving enhancer protein 3-1, chloroplastic (PSBQ1) from Zea mays (Maize).